A 514-amino-acid polypeptide reads, in one-letter code: Inosine-5'-monophosphate dehydrogenase (514 aa).

2 CBS domains span residues 112-171 (FISK…DTPV) and 175-233 (MTRR…PHST). NAD(+) is bound by residues 270 to 272 (DSS) and 320 to 322 (GMG). K(+) is bound by residues Gly-322 and Gly-324. An IMP-binding site is contributed by Ser-325. Cys-327 contributes to the K(+) binding site. Cys-327 acts as the Thioimidate intermediate in catalysis. Residues 360 to 362 (DGG), 383 to 384 (GG), and 407 to 411 (YRGMG) each bind IMP. Catalysis depends on Arg-425, which acts as the Proton acceptor. Gln-437 provides a ligand contact to IMP. Residues Glu-496, Gly-497, and Gly-498 each coordinate K(+). The short motif at 512–514 (AKM) is the Microbody targeting signal element.

The protein belongs to the IMPDH/GMPR family. Heterotetramer. Interacts with glycosomal protein sorting receptor PEX5. K(+) serves as cofactor.

It localises to the glycosome. The enzyme catalyses IMP + NAD(+) + H2O = XMP + NADH + H(+). Its pathway is purine metabolism; XMP biosynthesis via de novo pathway; XMP from IMP: step 1/1. With respect to regulation, mycophenolic acid (MPA) is a non-competitive inhibitor that prevents formation of the closed enzyme conformation by binding to the same site as the amobile flap. In contrast, mizoribine monophosphate (MZP) is a competitive inhibitor that induces the closed conformation. MPA is a potent inhibitor of mammalian IMPDHs but a poor inhibitor of the bacterial enzymes. MZP is a more potent inhibitor of bacterial IMPDH. Potently inhibited by MPA. Inhibited by XMP and GMP. In terms of biological role, catalyzes the conversion of inosine 5'-phosphate (IMP) to xanthosine 5'-phosphate (XMP), the first committed and rate-limiting step in the de novo synthesis of guanine nucleotides, and therefore plays an important role in the regulation of cell growth. This chain is Inosine-5'-monophosphate dehydrogenase, found in Leishmania donovani.